We begin with the raw amino-acid sequence, 242 residues long: uncharacterized protein (242 aa).

It belongs to the MtxX family.

This is an uncharacterized protein from Methanothermobacter thermautotrophicus (strain ATCC 29096 / DSM 1053 / JCM 10044 / NBRC 100330 / Delta H) (Methanobacterium thermoautotrophicum).